Consider the following 636-residue polypeptide: 1-deoxy-D-xylulose-5-phosphate synthase (636 aa).

Thiamine diphosphate-binding positions include histidine 72 and 113 to 115 (GHA). Aspartate 144 serves as a coordination point for Mg(2+). Thiamine diphosphate is bound by residues 145 to 146 (GS), asparagine 174, tyrosine 287, and glutamate 370. Asparagine 174 serves as a coordination point for Mg(2+).

This sequence belongs to the transketolase family. DXPS subfamily. In terms of assembly, homodimer. It depends on Mg(2+) as a cofactor. Thiamine diphosphate serves as cofactor.

The enzyme catalyses D-glyceraldehyde 3-phosphate + pyruvate + H(+) = 1-deoxy-D-xylulose 5-phosphate + CO2. It participates in metabolic intermediate biosynthesis; 1-deoxy-D-xylulose 5-phosphate biosynthesis; 1-deoxy-D-xylulose 5-phosphate from D-glyceraldehyde 3-phosphate and pyruvate: step 1/1. Functionally, catalyzes the acyloin condensation reaction between C atoms 2 and 3 of pyruvate and glyceraldehyde 3-phosphate to yield 1-deoxy-D-xylulose-5-phosphate (DXP). This Synechococcus sp. (strain ATCC 27144 / PCC 6301 / SAUG 1402/1) (Anacystis nidulans) protein is 1-deoxy-D-xylulose-5-phosphate synthase.